The following is an 829-amino-acid chain: Leucine--tRNA ligase (829 aa).

The 'HIGH' region signature appears at 40–50; it reads PYPSGNIHMGH. Residues 581–585 carry the 'KMSKS' region motif; that stretch reads KMSKS. Lys-584 is a binding site for ATP.

It belongs to the class-I aminoacyl-tRNA synthetase family.

It localises to the cytoplasm. It carries out the reaction tRNA(Leu) + L-leucine + ATP = L-leucyl-tRNA(Leu) + AMP + diphosphate. This Nitratidesulfovibrio vulgaris (strain DP4) (Desulfovibrio vulgaris) protein is Leucine--tRNA ligase.